The sequence spans 191 residues: Calcium-activated potassium channel subunit beta-1 (191 aa).

At 1-18 the chain is on the cytoplasmic side; it reads MGKKLVMAQKRGETRALC. A helical transmembrane segment spans residues 19–39; the sequence is LGVAMVVCAAITYYVLGTTVL. At 40-155 the chain is on the extracellular side; sequence PLYQKSVWTQ…VVYQRLYGPQ (116 aa). Asn80 and Asn142 each carry an N-linked (GlcNAc...) asparagine glycan. A helical membrane pass occupies residues 156–176; that stretch reads VLLFSFFWPTFLLTGGLLLIA. Over 177–191 the chain is Cytoplasmic; the sequence is MVKLNRSLSILAAQK.

This sequence belongs to the KCNMB (TC 8.A.14.1) family. KCNMB1 subfamily. As to quaternary structure, interacts with KCNMA1 tetramer. There are probably 4 molecules of KCMNB1 per KCNMA1 tetramer. In terms of processing, N-glycosylated. As to expression, expressed in many tissues containing smooth muscles. In brain and heart, it is not expressed except in the vasculature, such as cerebral arteries, aorta and corona arteries.

The protein localises to the membrane. In terms of biological role, regulatory subunit of the calcium activated potassium KCNMA1 (maxiK) channel. Modulates the calcium sensitivity and gating kinetics of KCNMA1, thereby contributing to KCNMA1 channel diversity. Increases the apparent Ca(2+)/voltage sensitivity of the KCNMA1 channel. It also modifies KCNMA1 channel kinetics and alters its pharmacological properties. It slows down the activation and the deactivation kinetics of the channel. Acts as a negative regulator of smooth muscle contraction by enhancing the calcium sensitivity to KCNMA1. Its presence is also a requirement for internal binding of the KCNMA1 channel opener dehydrosoyasaponin I (DHS-1) triterpene glycoside and for external binding of the agonist hormone 17-beta-estradiol (E2). Increases the binding activity of charybdotoxin (CTX) toxin to KCNMA1 peptide blocker by increasing the CTX association rate and decreasing the dissociation rate. The chain is Calcium-activated potassium channel subunit beta-1 (Kcnmb1) from Mus musculus (Mouse).